The sequence spans 304 residues: Glycosyltransferase AglE (304 aa).

The protein belongs to the glycosyltransferase 2 family.

It is found in the cell membrane. Its pathway is cell surface structure biogenesis; S-layer biogenesis. Involved in the assembly of a N-linked pentasaccharide that decorates the S-layer glycoprotein and flagellins. Catalyzes the addition to the dolichol phosphate carrier of the hexuronic acid found at position 4 of the pentasaccharide. The sequence is that of Glycosyltransferase AglE (aglE) from Haloferax volcanii (strain ATCC 29605 / DSM 3757 / JCM 8879 / NBRC 14742 / NCIMB 2012 / VKM B-1768 / DS2) (Halobacterium volcanii).